The following is an 865-amino-acid chain: Leucine--tRNA ligase (865 aa).

The short motif at 36–46 (PYPSGKIHMGH) is the 'HIGH' region element. The 'KMSKS' region motif lies at 608-612 (KMSKS). Residue Lys611 participates in ATP binding.

Belongs to the class-I aminoacyl-tRNA synthetase family.

The protein resides in the cytoplasm. It carries out the reaction tRNA(Leu) + L-leucine + ATP = L-leucyl-tRNA(Leu) + AMP + diphosphate. This chain is Leucine--tRNA ligase, found in Wolbachia sp. subsp. Brugia malayi (strain TRS).